A 61-amino-acid chain; its full sequence is Alpha-conotoxin PnIB (61 aa).

An N-terminal signal peptide occupies residues 1 to 21 (MGMRMMFTVFLLVVLATTVVS). Positions 22-44 (FTSDRASDDGNAAASDLIALTIK) are excised as a propeptide. Intrachain disulfides connect cysteine 46-cysteine 52 and cysteine 47-cysteine 60. Positions 48-50 (SLP) are ser-Xaa-Pro motif, crucial for potent interaction with nAChR. Tyrosine 59 carries the post-translational modification Sulfotyrosine. Cysteine 60 is modified (cysteine amide).

This sequence belongs to the conotoxin A superfamily. As to expression, expressed by the venom duct.

The protein resides in the secreted. Functionally, alpha-conotoxins act on postsynaptic membranes, they bind to the nicotinic acetylcholine receptors (nAChR) and thus inhibit them. This toxin blocks mammalian nAChRs (alpha-7/CHRNA7 &gt; alpha-3-beta-2/CHRNA3-CHRNB2). The protein is Alpha-conotoxin PnIB of Conus pennaceus (Feathered cone).